The primary structure comprises 363 residues: Homeobox protein Hox-A2a (363 aa).

Disordered regions lie at residues 30–88, 98–117, 189–220, and 268–308; these read DSFQ…LPPE, SKRN…GPVC, RMKH…SDEE, and DKNL…LDVS. Polar residues predominate over residues 31 to 44; the sequence is SFQSSSIKSSTLSR. The Antp-type hexapeptide signature appears at 88-93; that stretch reads EYPWMR. Positions 103–113 are enriched in polar residues; sequence LPNSTTTTISN. Residues 137–196 constitute a DNA-binding region (homeobox); sequence SRRLRTAYTNTQLLELEKEFHFNKYLCRPRRVEIAALLDLTERQVKVWFQNRRMKHKRQT.

The protein belongs to the Antp homeobox family. Proboscipedia subfamily.

It localises to the nucleus. Sequence-specific transcription factor which is part of a developmental regulatory system that provides cells with specific positional identities on the anterior-posterior axis. This Takifugu rubripes (Japanese pufferfish) protein is Homeobox protein Hox-A2a (hoxa2a).